Here is a 325-residue protein sequence, read N- to C-terminus: D site-binding protein (325 aa).

Disordered stretches follow at residues 1 to 98 (MARP…AGPS), 124 to 203 (LEHG…EVLM), and 230 to 256 (FSEE…QKDE). The segment covering 17-28 (GPAGAPPGGGAL) has biased composition (gly residues). Residues 71 to 80 (AGPADAPSGA) are compositionally biased toward low complexity. Ser-86 is modified (phosphoserine). Residues 88 to 98 (RGRSGPVAGPS) show a composition bias toward low complexity. Residues 129-153 (PPSPPPPGGLSPAPSPARTPAPSPG) show a composition bias toward pro residues. Positions 154–171 (PGSCSSSSPRSSPGHAPA) are enriched in low complexity. The bZIP domain maps to 255–318 (DEKYWSRRYK…SHYRAVLSRY (64 aa)). A basic motif region spans residues 257–279 (KYWSRRYKNNEAAKRSRDARRLK). The segment at 283-297 (ISVRAAFLEKENALL) is leucine-zipper.

Belongs to the bZIP family. PAR subfamily. As to quaternary structure, binds DNA as a homodimer or a heterodimer. Can form a heterodimer with TEF. As to expression, expressed in the suprachiasmatic nuclei (SCN) and in most peripheral tissues, with a strong circadian rhythmicity.

Its subcellular location is the nucleus. Functionally, this transcriptional activator recognizes and binds to the sequence 5'-RTTAYGTAAY-3' found in the promoter of genes such as albumin, CYP2A4 and CYP2A5. It is not essential for circadian rhythm generation, but modulates important clock output genes. May be a direct target for regulation by the circadian pacemaker component clock. May affect circadian period and sleep regulation. This chain is D site-binding protein (Dbp), found in Mus musculus (Mouse).